Reading from the N-terminus, the 551-residue chain is Arginine--tRNA ligase (551 aa).

The 'HIGH' region motif lies at 124-134 (ANPTGPLHIGH).

The protein belongs to the class-I aminoacyl-tRNA synthetase family. In terms of assembly, monomer.

It is found in the cytoplasm. It catalyses the reaction tRNA(Arg) + L-arginine + ATP = L-arginyl-tRNA(Arg) + AMP + diphosphate. The polypeptide is Arginine--tRNA ligase (Solidesulfovibrio magneticus (strain ATCC 700980 / DSM 13731 / RS-1) (Desulfovibrio magneticus)).